The sequence spans 199 residues: Putative pseudouridine methyltransferase (199 aa).

2 residues coordinate S-adenosyl-L-methionine: Leu132 and Cys186.

The protein belongs to the methyltransferase superfamily. TrmY family.

The protein localises to the cytoplasm. The protein is Putative pseudouridine methyltransferase of Vibrio campbellii (strain ATCC BAA-1116).